A 188-amino-acid chain; its full sequence is RNA 2',3'-cyclic phosphodiesterase (188 aa).

The active-site Proton donor is the H42. 2 short sequence motifs (HXTX) span residues 42 to 45 (HMTL) and 130 to 133 (HVTI). Residue H130 is the Proton acceptor of the active site.

This sequence belongs to the 2H phosphoesterase superfamily. ThpR family.

It carries out the reaction a 3'-end 2',3'-cyclophospho-ribonucleotide-RNA + H2O = a 3'-end 2'-phospho-ribonucleotide-RNA + H(+). Functionally, hydrolyzes RNA 2',3'-cyclic phosphodiester to an RNA 2'-phosphomonoester. This chain is RNA 2',3'-cyclic phosphodiesterase, found in Aquifex aeolicus (strain VF5).